Here is a 342-residue protein sequence, read N- to C-terminus: UDP-3-O-acylglucosamine N-acyltransferase (342 aa).

Histidine 238 functions as the Proton acceptor in the catalytic mechanism.

The protein belongs to the transferase hexapeptide repeat family. LpxD subfamily. As to quaternary structure, homotrimer.

It carries out the reaction a UDP-3-O-[(3R)-3-hydroxyacyl]-alpha-D-glucosamine + a (3R)-hydroxyacyl-[ACP] = a UDP-2-N,3-O-bis[(3R)-3-hydroxyacyl]-alpha-D-glucosamine + holo-[ACP] + H(+). The protein operates within bacterial outer membrane biogenesis; LPS lipid A biosynthesis. Functionally, catalyzes the N-acylation of UDP-3-O-acylglucosamine using 3-hydroxyacyl-ACP as the acyl donor. Is involved in the biosynthesis of lipid A, a phosphorylated glycolipid that anchors the lipopolysaccharide to the outer membrane of the cell. This Tolumonas auensis (strain DSM 9187 / NBRC 110442 / TA 4) protein is UDP-3-O-acylglucosamine N-acyltransferase.